The primary structure comprises 289 residues: Pantoate kinase (289 aa).

The protein belongs to the GHMP kinase family. PoK subfamily.

The catalysed reaction is (R)-pantoate + ATP = (R)-4-phosphopantoate + ADP + H(+). Its pathway is cofactor biosynthesis; coenzyme A biosynthesis. Functionally, phosphorylates (R)-pantoate to form (R)-4-phosphopantoate in the CoA biosynthesis pathway. ATP is the best phosphate donor. Can be replaced with UTP, with lower efficiency. The sequence is that of Pantoate kinase from Methanospirillum hungatei JF-1 (strain ATCC 27890 / DSM 864 / NBRC 100397 / JF-1).